Reading from the N-terminus, the 298-residue chain is MLYFIGLGLSYETDITVRGLNAIKQCSRVYLEHYTSILMTASLEELEEFYGKKVTLADRELVESGAEELLRDADKEDVAFLVVGDVFGATTHTDLVLRAKQRNIPVEVIHNASVMNAVGSCGLQLYNFGQTISMVFFTDSWRPDSWYDKIWENRKIGLHTLVLLDIKVKEQSIENMARGRLIYEPPRYMSIAQCCEQLLEIEETRGTEAYTPDTPCVAISRLGSASQTFKAGTIKELAEYDSGEPLHSLVILGRQTHELEIEYLLEFCDDREKFKQDVASDQEYFKPPAWVPPPEDED.

Residues leucine 9, aspartate 85, glycine 88, 113-114 (SV), leucine 164, leucine 222, and histidine 247 each bind S-adenosyl-L-methionine.

The protein belongs to the diphthine synthase family.

The protein localises to the cytoplasm. The catalysed reaction is 2-[(3S)-amino-3-carboxypropyl]-L-histidyl-[translation elongation factor 2] + 4 S-adenosyl-L-methionine = diphthine methyl ester-[translation elongation factor 2] + 4 S-adenosyl-L-homocysteine + 3 H(+). Its pathway is protein modification; peptidyl-diphthamide biosynthesis. Functionally, S-adenosyl-L-methionine-dependent methyltransferase that catalyzes four methylations of the modified target histidine residue in translation elongation factor 2 (EF-2), to form an intermediate called diphthine methyl ester. The four successive methylation reactions represent the second step of diphthamide biosynthesis. In Kluyveromyces lactis (strain ATCC 8585 / CBS 2359 / DSM 70799 / NBRC 1267 / NRRL Y-1140 / WM37) (Yeast), this protein is Diphthine methyl ester synthase (DPH5).